The primary structure comprises 279 residues: Zinc finger CCCH domain-containing protein 42 (279 aa).

Residues 11-77 are disordered; that stretch reads SDHRSSSTPM…KAAVEPQEYP (67 aa). A compositionally biased stretch (low complexity) spans 16–39; it reads SSTPMATTTSSSASDPAAISPTPS. C3H1-type zinc fingers lie at residues 79-107, 120-148, and 186-214; these read RPGV…HPAK, RPGE…HPPD, and RPGT…HPNS.

The protein is Zinc finger CCCH domain-containing protein 42 of Oryza sativa subsp. japonica (Rice).